The sequence spans 328 residues: Ferredoxin--NADP reductase 2 (328 aa).

FAD contacts are provided by Thr-16, Glu-35, Gln-43, Tyr-48, Ile-88, Phe-123, Asp-284, and Thr-325.

Belongs to the ferredoxin--NADP reductase type 2 family. Homodimer. FAD is required as a cofactor.

It catalyses the reaction 2 reduced [2Fe-2S]-[ferredoxin] + NADP(+) + H(+) = 2 oxidized [2Fe-2S]-[ferredoxin] + NADPH. This is Ferredoxin--NADP reductase 2 from Oceanobacillus iheyensis (strain DSM 14371 / CIP 107618 / JCM 11309 / KCTC 3954 / HTE831).